The sequence spans 156 residues: PKLSQDEIDDLKDVFELFDFWDGRDGAVDAFKLGDVCRCLGINPRNDDVFAVGGTHKMGEKSLPFEEFLPAYEGLMDCEQGTFADYMEAFKTFDREGQGFISGAELRHVLTALGERLTDEEIDEIISLTDLQEDLEGNVKYEDFVKKVMAGPYPDK.

2 EF-hand domains span residues 6 to 43 and 81 to 116; these read DEID…LGIN and GTFA…LGER.

Its function is as follows. In molluscan muscle, calcium regulation is associated with myosin rather than with actin. Muscle myosin contains two types of light chains: the catalytic light chain, essential for ATPase activity, and the regulatory light chain, a calcium-binding protein responsible for Ca(2+) dependent binding and Ca(2+) dependent Mg-ATPase activity. This Mizuhopecten yessoensis (Japanese scallop) protein is Myosin, essential light chain, adductor muscle.